Reading from the N-terminus, the 678-residue chain is Glycine--tRNA ligase beta subunit (678 aa).

It belongs to the class-II aminoacyl-tRNA synthetase family. Tetramer of two alpha and two beta subunits.

The protein resides in the cytoplasm. The catalysed reaction is tRNA(Gly) + glycine + ATP = glycyl-tRNA(Gly) + AMP + diphosphate. This Streptococcus pneumoniae (strain 70585) protein is Glycine--tRNA ligase beta subunit.